A 235-amino-acid chain; its full sequence is Sperm-associated microtubule inner protein 5 (235 aa).

Microtubule inner protein component of sperm flagellar doublet microtubules. In terms of tissue distribution, expressed in sperm.

The protein resides in the cytoplasm. It is found in the cytoskeleton. It localises to the flagellum axoneme. The protein localises to the nucleus. Functionally, microtubule inner protein (MIP) part of the dynein-decorated doublet microtubules (DMTs) in flagellum axoneme. May serve to reinforce and thus stabilize the microtubule structure in the sperm flagella. The chain is Sperm-associated microtubule inner protein 5 (SPMIP5) from Bos taurus (Bovine).